The sequence spans 902 residues: 3'-5' exonuclease DinG (902 aa).

Positions 8-161 (VVDLETTGNQ…DEDATTTAKL (154 aa)) constitute an Exonuclease domain. In terms of domain architecture, Helicase ATP-binding spans 241-496 (KNVTQSLNLT…KAVDKLEQQR (256 aa)). 276-283 (APLGSGKS) contributes to the ATP binding site. Positions 448-451 (DEAH) match the DEAH box motif. The 170-residue stretch at 714–883 (YIVEYITVTQ…HFKQRKGNIK (170 aa)) folds into the Helicase C-terminal domain.

This sequence belongs to the helicase family. DinG subfamily. Type 2 sub-subfamily.

Its function is as follows. 3'-5' exonuclease. The chain is 3'-5' exonuclease DinG from Staphylococcus epidermidis (strain ATCC 35984 / DSM 28319 / BCRC 17069 / CCUG 31568 / BM 3577 / RP62A).